Here is a 478-residue protein sequence, read N- to C-terminus: Uronate isomerase (478 aa).

It belongs to the metallo-dependent hydrolases superfamily. Uronate isomerase family.

It carries out the reaction D-glucuronate = D-fructuronate. The enzyme catalyses aldehydo-D-galacturonate = keto-D-tagaturonate. It participates in carbohydrate metabolism; pentose and glucuronate interconversion. In Bacillus pumilus (strain SAFR-032), this protein is Uronate isomerase.